Here is a 177-residue protein sequence, read N- to C-terminus: Adenine phosphoribosyltransferase (177 aa).

Belongs to the purine/pyrimidine phosphoribosyltransferase family. Homodimer.

The protein localises to the cytoplasm. It catalyses the reaction AMP + diphosphate = 5-phospho-alpha-D-ribose 1-diphosphate + adenine. It participates in purine metabolism; AMP biosynthesis via salvage pathway; AMP from adenine: step 1/1. Functionally, catalyzes a salvage reaction resulting in the formation of AMP, that is energically less costly than de novo synthesis. This is Adenine phosphoribosyltransferase from Anaeromyxobacter sp. (strain Fw109-5).